We begin with the raw amino-acid sequence, 831 residues long: Prolactin receptor (831 aa).

Residues 1–23 (MKQNLISSVQIILLLPLTTVGLT) form the signal peptide. Topologically, residues 24-438 (SQSFPGKPKI…EIPNDFRVKD (415 aa)) are extracellular. Fibronectin type-III domains lie at 30 to 128 (KPKI…VQPG), 129 to 232 (SPVN…SPPE), 233 to 331 (KPTI…VQPD), and 332 to 433 (PPAN…IPND). Cys36 and Cys46 are oxidised to a cystine. A glycan (N-linked (GlcNAc...) asparagine) is linked at Asn59. Cys75 and Cys86 are joined by a disulfide. Residues Asn91, Asn100, Asn112, Asn132, Asn262, Asn303, Asn315, and Asn335 are each glycosylated (N-linked (GlcNAc...) asparagine). 2 residues coordinate Zn(2+): Asp414 and His416. The short motif at 419 to 423 (WSEWS) is the WSXWS motif element. The helical transmembrane segment at 439 to 459 (MIVWIVLGVLSSLICLIMSWT) threads the bilayer. Over 460 to 831 (MVLKGYRMIT…DPSSFMPSFK (372 aa)) the chain is Cytoplasmic. A Box 1 motif motif is present at residues 471-479 (ILPPVPGPK). Disordered stretches follow at residues 527–563 (HQLMPSHDSGRPSKNAKITLKETDRDSGRGSCDSPSL) and 776–831 (HTPT…PSFK). Residues 545–554 (TLKETDRDSG) are compositionally biased toward basic and acidic residues. Positions 777–803 (TPTSQEEPAKETSQNPQQGQVETNMSY) are enriched in polar residues.

This sequence belongs to the type I cytokine receptor family. Type 1 subfamily.

It localises to the membrane. In terms of biological role, this is a receptor for the anterior pituitary hormone prolactin. This Meleagris gallopavo (Wild turkey) protein is Prolactin receptor (PRLR).